We begin with the raw amino-acid sequence, 26 residues long: FTPEDFISAPRRGEAIPDPKGELAVF.

The disordered stretch occupies residues 1 to 26 (FTPEDFISAPRRGEAIPDPKGELAVF). Positions 11–26 (RRGEAIPDPKGELAVF) are enriched in basic and acidic residues.

In Trichophyton tonsurans (Scalp ringworm fungus), this protein is 83 kDa hypersensitivity protein.